Consider the following 296-residue polypeptide: Bifunctional protein FolD (296 aa).

NADP(+) contacts are provided by residues 166-168 (GRS), serine 195, and threonine 236.

Belongs to the tetrahydrofolate dehydrogenase/cyclohydrolase family. In terms of assembly, homodimer.

The catalysed reaction is (6R)-5,10-methylene-5,6,7,8-tetrahydrofolate + NADP(+) = (6R)-5,10-methenyltetrahydrofolate + NADPH. It carries out the reaction (6R)-5,10-methenyltetrahydrofolate + H2O = (6R)-10-formyltetrahydrofolate + H(+). It participates in one-carbon metabolism; tetrahydrofolate interconversion. Functionally, catalyzes the oxidation of 5,10-methylenetetrahydrofolate to 5,10-methenyltetrahydrofolate and then the hydrolysis of 5,10-methenyltetrahydrofolate to 10-formyltetrahydrofolate. This is Bifunctional protein FolD from Dehalococcoides mccartyi (strain ATCC BAA-2266 / KCTC 15142 / 195) (Dehalococcoides ethenogenes (strain 195)).